Reading from the N-terminus, the 203-residue chain is Holliday junction branch migration complex subunit RuvA (203 aa).

The interval 1–63 is domain I; sequence MYEYLKGLVT…DTDITLFGFY (63 aa). The segment at 64-142 is domain II; sequence DLDEKQLFQK…DLEQSATLVG (79 aa). A flexible linker region spans residues 143–153; sequence QTAIDLGSQGD. The interval 153–203 is domain III; it reads DSPELSDALAALSALGYSAREVKAITPKLTDFAAQTTDQYLREGLRLLMKK.

It belongs to the RuvA family. Homotetramer. Forms an RuvA(8)-RuvB(12)-Holliday junction (HJ) complex. HJ DNA is sandwiched between 2 RuvA tetramers; dsDNA enters through RuvA and exits via RuvB. An RuvB hexamer assembles on each DNA strand where it exits the tetramer. Each RuvB hexamer is contacted by two RuvA subunits (via domain III) on 2 adjacent RuvB subunits; this complex drives branch migration. In the full resolvosome a probable DNA-RuvA(4)-RuvB(12)-RuvC(2) complex forms which resolves the HJ.

The protein localises to the cytoplasm. Functionally, the RuvA-RuvB-RuvC complex processes Holliday junction (HJ) DNA during genetic recombination and DNA repair, while the RuvA-RuvB complex plays an important role in the rescue of blocked DNA replication forks via replication fork reversal (RFR). RuvA specifically binds to HJ cruciform DNA, conferring on it an open structure. The RuvB hexamer acts as an ATP-dependent pump, pulling dsDNA into and through the RuvAB complex. HJ branch migration allows RuvC to scan DNA until it finds its consensus sequence, where it cleaves and resolves the cruciform DNA. This Latilactobacillus sakei subsp. sakei (strain 23K) (Lactobacillus sakei subsp. sakei) protein is Holliday junction branch migration complex subunit RuvA.